Here is a 291-residue protein sequence, read N- to C-terminus: ATP synthase gamma chain (291 aa).

The protein belongs to the ATPase gamma chain family. As to quaternary structure, F-type ATPases have 2 components, CF(1) - the catalytic core - and CF(0) - the membrane proton channel. CF(1) has five subunits: alpha(3), beta(3), gamma(1), delta(1), epsilon(1). CF(0) has three main subunits: a, b and c.

The protein localises to the cell inner membrane. Produces ATP from ADP in the presence of a proton gradient across the membrane. The gamma chain is believed to be important in regulating ATPase activity and the flow of protons through the CF(0) complex. The chain is ATP synthase gamma chain from Rhodopseudomonas palustris (strain HaA2).